We begin with the raw amino-acid sequence, 66 residues long: Potassium channel toxin alpha-KTx (66 aa).

Residues 1–21 (MNTKVVLIMLMITSVILVVEA) form the signal peptide. Cystine bridges form between cysteine 29–cysteine 49, cysteine 35–cysteine 59, cysteine 39–cysteine 61, and cysteine 44–cysteine 64.

It belongs to the short scorpion toxin superfamily. Potassium channel inhibitor family. As to expression, expressed by the venom gland.

The protein localises to the secreted. Blocks voltage-gated potassium channels. The sequence is that of Potassium channel toxin alpha-KTx from Hoffmannihadrurus gertschi (Scorpion).